Reading from the N-terminus, the 473-residue chain is FAD-dependent monooxygenase ctvC (473 aa).

Residues Glu37, Ala51, and Arg110 each contribute to the FAD site. The helical transmembrane segment at 218 to 238 (IGPGFTFLIFPAAGDSLFWVL) threads the bilayer. 2 residues coordinate FAD: Asp310 and Ala323. N-linked (GlcNAc...) asparagine glycosylation is present at Asn358. Residues 451 to 471 (LVYCFGVVILLWISWAVFNVN) traverse the membrane as a helical segment.

It belongs to the paxM FAD-dependent monooxygenase family. Requires FAD as cofactor.

The protein resides in the membrane. It participates in mycotoxin biosynthesis. FAD-dependent monooxygenase; part of the gene cluster that mediates the biosynthesis of citreoviridin, an inhibitor of the of F1-ATPase beta-subunit. The HR-PKS ctvA accepts acetyl-CoA as the starter unit and catalyzes eight iterations of malonyl-CoA extension and four iterations of SAM-dependent methylation at C4, C12, C14, and C16. The KR and DH domains selectively act on the first six iterations to generate the hexaene chain. In the last three iterations, the KR and DH domains terminate their functions to yield a beta,delta-diketo ester moiety, which then undergoes intramolecular cyclization to yield an alpha-pyrone intermediate. Subsequently, ctvB methylates the alpha-pyrone hydroxyl group to generate citreomontanin. In order to form the tetrahydrofuran ring with the correct stereochemistry, the terminal alkenes of citreomontanin need to undergo isomerization to yield a (17Z)-hexaene, a step that could be catalyzed by ctvC. The (17Z)-hexaene then undergoes bisepoxidation by ctvC to form a (17R,16R,15S,14R)-bisepoxide moiety. Lastly, ctvD acts as a regioselective hydrolase to form the tetrahydrofuran ring with the substituents in the correct absolute configuration, completing the biosynthesis of citreoviridin. The chain is FAD-dependent monooxygenase ctvC from Aspergillus terreus (strain NIH 2624 / FGSC A1156).